We begin with the raw amino-acid sequence, 239 residues long: Tetrahydromethanopterin S-methyltransferase subunit A (239 aa).

The Cytoplasmic portion of the chain corresponds to 1–215; that stretch reads MADKKAPAAG…EAAMIAKFNS (215 aa). A 5-hydroxybenzimidazolylcob(I)amide-binding site is contributed by His-85. The helical transmembrane segment at 216–238 threads the bilayer; that stretch reads GYYNGKIQGIAIGLFLSIVIFSL. Leu-239 is a topological domain (extracellular).

Belongs to the MtrA family. In terms of assembly, the complex is composed of 8 subunits; MtrA, MtrB, MtrC, MtrD, MtrE, MtrF, MtrG and MtrH. It depends on 5-hydroxybenzimidazolylcob(I)amide as a cofactor.

It is found in the cell membrane. The catalysed reaction is 5-methyl-5,6,7,8-tetrahydromethanopterin + coenzyme M + 2 Na(+)(in) = 5,6,7,8-tetrahydromethanopterin + methyl-coenzyme M + 2 Na(+)(out). The protein operates within one-carbon metabolism; methanogenesis from CO(2); methyl-coenzyme M from 5,10-methylene-5,6,7,8-tetrahydromethanopterin: step 2/2. Its function is as follows. Part of a complex that catalyzes the formation of methyl-coenzyme M and tetrahydromethanopterin from coenzyme M and methyl-tetrahydromethanopterin. This is an energy-conserving, sodium-ion translocating step. The protein is Tetrahydromethanopterin S-methyltransferase subunit A of Methanococcus maripaludis (strain DSM 14266 / JCM 13030 / NBRC 101832 / S2 / LL).